Reading from the N-terminus, the 750-residue chain is NAD(P)H-quinone oxidoreductase subunit 5, chloroplastic (750 aa).

Helical transmembrane passes span 9–29 (WIIP…LLLF), 39–59 (IWAF…LDLS), 89–109 (IDSL…LVLI), 125–145 (FAYM…SNLI), 147–167 (IYFF…FWFT), 185–205 (GDFG…SLEF), 219–239 (NEMN…GSVA), 267–287 (ATMV…FVLL), 290–310 (IMNT…TLAI), 327–347 (LGYM…FHLI), 354–374 (ALLF…VGYS), 396–416 (FFFL…CFWS), 427–447 (YSPI…FYMF), 554–574 (FSML…ISFS), 606–626 (FFTN…IASF), and 728–748 (ILLY…FVFI).

It belongs to the complex I subunit 5 family. As to quaternary structure, NDH is composed of at least 16 different subunits, 5 of which are encoded in the nucleus.

The protein resides in the plastid. Its subcellular location is the chloroplast thylakoid membrane. The catalysed reaction is a plastoquinone + NADH + (n+1) H(+)(in) = a plastoquinol + NAD(+) + n H(+)(out). It catalyses the reaction a plastoquinone + NADPH + (n+1) H(+)(in) = a plastoquinol + NADP(+) + n H(+)(out). In terms of biological role, NDH shuttles electrons from NAD(P)H:plastoquinone, via FMN and iron-sulfur (Fe-S) centers, to quinones in the photosynthetic chain and possibly in a chloroplast respiratory chain. The immediate electron acceptor for the enzyme in this species is believed to be plastoquinone. Couples the redox reaction to proton translocation, and thus conserves the redox energy in a proton gradient. The polypeptide is NAD(P)H-quinone oxidoreductase subunit 5, chloroplastic (ndhF) (Phaseolus vulgaris (Kidney bean)).